We begin with the raw amino-acid sequence, 445 residues long: Phosphoglucosamine mutase (445 aa).

Serine 99 (phosphoserine intermediate) is an active-site residue. 4 residues coordinate Mg(2+): serine 99, aspartate 242, aspartate 244, and aspartate 246. A Phosphoserine modification is found at serine 99.

Belongs to the phosphohexose mutase family. Mg(2+) serves as cofactor. Activated by phosphorylation.

It catalyses the reaction alpha-D-glucosamine 1-phosphate = D-glucosamine 6-phosphate. Functionally, catalyzes the conversion of glucosamine-6-phosphate to glucosamine-1-phosphate. The sequence is that of Phosphoglucosamine mutase from Campylobacter jejuni subsp. jejuni serotype O:2 (strain ATCC 700819 / NCTC 11168).